Reading from the N-terminus, the 225-residue chain is MAGESFEWWRRTMQYQTGLGLTADEKARYEKDYAVYNREKQCKSCYEYRDWMLKYSPTVRFMIQQISKLNGNASDGKVLNFDESKIICDECPDWKSGGFHPEIGILLCQNRLKDKWHLEDTLSHELVHYFDNLKWQIDWLNLKQHACSEIRASALSGECRFSREFARLGFSMNFGRGHQDCAKRRAIISVMGNPNCKDKEHATKVVEEVWDSCFYDTRPFEEIYR.

His-124 serves as a coordination point for a divalent metal cation. Residue Glu-125 is part of the active site. His-128 is a binding site for a divalent metal cation.

Belongs to the peptidase M76 family.

It is found in the mitochondrion inner membrane. Has a dual role in the assembly of mitochondrial ATPase. Acts as a protease that removes N-terminal residues of mitochondrial ATPase CF(0) subunit 6 at the intermembrane space side. Also involved in the correct assembly of the membrane-embedded ATPase CF(0) particle, probably mediating association of subunit 6 with the subunit 9 ring. The sequence is that of Mitochondrial inner membrane protease ATP23 (ATP23) from Candida glabrata (strain ATCC 2001 / BCRC 20586 / JCM 3761 / NBRC 0622 / NRRL Y-65 / CBS 138) (Yeast).